The sequence spans 387 residues: 3-ketoacyl-CoA thiolase (387 aa).

The active-site Acyl-thioester intermediate is the Cys-91. Residues His-343 and Cys-373 each act as proton acceptor in the active site.

The protein belongs to the thiolase-like superfamily. Thiolase family. Heterotetramer of two alpha chains (FadB) and two beta chains (FadA).

The protein resides in the cytoplasm. It carries out the reaction an acyl-CoA + acetyl-CoA = a 3-oxoacyl-CoA + CoA. Its pathway is lipid metabolism; fatty acid beta-oxidation. Catalyzes the final step of fatty acid oxidation in which acetyl-CoA is released and the CoA ester of a fatty acid two carbons shorter is formed. This chain is 3-ketoacyl-CoA thiolase, found in Yersinia pseudotuberculosis serotype O:1b (strain IP 31758).